Here is a 168-residue protein sequence, read N- to C-terminus: Peptidyl-prolyl cis-trans isomerase-like 3 (168 aa).

Residues 1–156 (MSVTLHTNVG…SEIRMTGVTV (156 aa)) enclose the PPIase cyclophilin-type domain.

Belongs to the cyclophilin-type PPIase family. PPIL3 subfamily.

It carries out the reaction [protein]-peptidylproline (omega=180) = [protein]-peptidylproline (omega=0). PPIases accelerate the folding of proteins. It catalyzes the cis-trans isomerization of proline imidic peptide bonds in oligopeptides. The protein is Peptidyl-prolyl cis-trans isomerase-like 3 (CYP10) of Mycosarcoma maydis (Corn smut fungus).